An 85-amino-acid chain; its full sequence is Protein Vpu (85 aa).

At 1–7 (MHHRDLL) the chain is on the extracellular side. The chain crosses the membrane as a helical span at residues 8 to 28 (AIIIISALLFINVILWGFILR). The Cytoplasmic portion of the chain corresponds to 29–85 (KYLEQKEQDRKEREILERLRRIREIRDDSDYESNGEEEQEVMDLVLSHGFDNPMFEP).

The protein belongs to the HIV-1 VPU protein family. As to quaternary structure, homopentamer. Interacts with host CD4 and BRTC; these interactions induce proteasomal degradation of CD4. Interacts with host BST2; this interaction leads to the degradation of host BST2. Interacts with host FBXW11. Interacts with host AP1M1; this interaction plays a role in the mistrafficking and subsequent degradation of host BST2. Interacts with host RANBP2; this interaction allows Vpu to down-regulate host BLM sumoylation. In terms of processing, phosphorylated by host CK2. This phosphorylation is necessary for interaction with human BTRC and degradation of CD4.

It is found in the host membrane. With respect to regulation, ion channel activity is inhibited by hexamethylene amiloride in vitro. Functionally, enhances virion budding by targeting host CD4 and Tetherin/BST2 to proteasome degradation. Degradation of CD4 prevents any unwanted premature interactions between viral Env and its host receptor CD4 in the endoplasmic reticulum. Degradation of antiretroviral protein Tetherin/BST2 is important for virion budding, as BST2 tethers new viral particles to the host cell membrane. Mechanistically, Vpu bridges either CD4 or BST2 to BTRC, a substrate recognition subunit of the Skp1/Cullin/F-box protein E3 ubiquitin ligase, induces their ubiquitination and subsequent proteasomal degradation. The alteration of the E3 ligase specificity by Vpu seems to promote the degradation of host IKBKB, leading to NF-kappa-B down-regulation and subsequent apoptosis. Acts as a viroporin that forms an oligomeric ion channel in membranes. Modulates the host DNA repair mechanisms to promote degradation of nuclear viral cDNA in cells that are already productively infected in order to suppress immune sensing and proviral hyper-integration (superinfection). Manipulates PML-NBs and modulates SUMOylation of host BLM protein thereby enhancing its DNA-end processing activity toward viral unintegrated linear DNA. Also inhibits RAD52-mediated homologous repair of viral cDNA, preventing the generation of dead-end circular forms of single copies of the long terminal repeat and permitting sustained nucleolytic attack. The polypeptide is Protein Vpu (Human immunodeficiency virus type 1 group O (isolate ANT70) (HIV-1)).